The sequence spans 1111 residues: Lysylphosphatidylglycerol biosynthesis bifunctional protein LysX (1111 aa).

A phosphatidylglycerol lysyltransferase region spans residues 1–612 (MTLTSPPRTR…VLHHDGTAPD (612 aa)). Transmembrane regions (helical) follow at residues 18–38 (VPAA…IASV), 60–80 (FPDT…ALAA), 84–104 (IAWW…VADL), 118–138 (VIGL…RPLF), 152–172 (GVLA…LELF), 209–229 (VNAL…IVLF), and 308–328 (AWLA…ASVG). A lysine--tRNA ligase region spans residues 613–1111 (MSGLRTDTAD…TLPFPLARPR (499 aa)). Positions 674-747 (VAGRVLRIRD…GTRSLLVRHW (74 aa)) form a DNA-binding region, OB. 2 residues coordinate Mg(2+): aspartate 1023 and glutamate 1030.

The protein in the N-terminal section; belongs to the LPG synthetase family. It in the C-terminal section; belongs to the class-II aminoacyl-tRNA synthetase family. It depends on Mg(2+) as a cofactor.

The protein resides in the cell membrane. The enzyme catalyses tRNA(Lys) + L-lysine + ATP = L-lysyl-tRNA(Lys) + AMP + diphosphate. It catalyses the reaction L-lysyl-tRNA(Lys) + a 1,2-diacyl-sn-glycero-3-phospho-(1'-sn-glycerol) = a 1,2-diacyl-sn-glycero-3-phospho-1'-(3'-O-L-lysyl)-sn-glycerol + tRNA(Lys). In terms of biological role, catalyzes the production of L-lysyl-tRNA(Lys)transfer and the transfer of a lysyl group from L-lysyl-tRNA(Lys) to membrane-bound phosphatidylglycerol (PG), which produces lysylphosphatidylglycerol (LPG), one of the components of the bacterial membrane with a positive net charge. LPG synthesis contributes to the resistance to cationic antimicrobial peptides (CAMPs) and likely protects M.tuberculosis against the CAMPs produced by competiting microorganisms (bacteriocins). In fact, the modification of anionic phosphatidylglycerol with positively charged L-lysine results in repulsion of the peptides. The sequence is that of Lysylphosphatidylglycerol biosynthesis bifunctional protein LysX (lysX) from Mycobacterium sp. (strain JLS).